Here is a 259-residue protein sequence, read N- to C-terminus: uncharacterized protein (259 aa).

Disordered regions lie at residues 22-68, 111-133, and 181-202; these read GLQP…VSFG, REEQKLRKRSRQNDDGSDDDEVE, and LGGKKETEKMPMAARRGMKKKQ. Acidic residues predominate over residues 50 to 63; that stretch reads NEEEDAISDMEDKE. Serine 127 carries the phosphoserine modification.

This is an uncharacterized protein from Schizosaccharomyces pombe (strain 972 / ATCC 24843) (Fission yeast).